The sequence spans 526 residues: Probable feruloyl esterase B-2 (526 aa).

The N-terminal stretch at 1 to 19 is a signal peptide; that stretch reads MPSLRRLLPFLAAGSAALA. 2 disulfides stabilise this stretch: C28–C75 and C63–C114. 4 N-linked (GlcNAc...) asparagine glycosylation sites follow: N53, N85, N98, and N138. 3 cysteine pairs are disulfide-bonded: C187–C441, C256–C273, and C282–C291. S188 serves as the catalytic Acyl-ester intermediate. N246 carries an N-linked (GlcNAc...) asparagine glycan. Positions 257, 260, 262, 264, and 266 each coordinate Ca(2+). N287 and N311 each carry an N-linked (GlcNAc...) asparagine glycan. Active-site charge relay system residues include D400 and H440. N-linked (GlcNAc...) asparagine glycosylation is found at N490 and N516. The cysteines at positions 503 and 525 are disulfide-linked.

The protein belongs to the tannase family.

It localises to the secreted. It carries out the reaction feruloyl-polysaccharide + H2O = ferulate + polysaccharide.. Involved in degradation of plant cell walls. Hydrolyzes the feruloyl-arabinose ester bond in arabinoxylans as well as the feruloyl-galactose and feruloyl-arabinose ester bonds in pectin. This Aspergillus oryzae (strain ATCC 42149 / RIB 40) (Yellow koji mold) protein is Probable feruloyl esterase B-2 (faeB-2).